The chain runs to 339 residues: UDP-N-acetylenolpyruvoylglucosamine reductase (339 aa).

The 171-residue stretch at 19–189 folds into the FAD-binding PCMH-type domain; that stretch reads VDVRAQLFAE…LRVRFALNRV (171 aa). Residue Arg166 is part of the active site. Catalysis depends on Ser239, which acts as the Proton donor. Glu335 is a catalytic residue.

This sequence belongs to the MurB family. The cofactor is FAD.

Its subcellular location is the cytoplasm. The enzyme catalyses UDP-N-acetyl-alpha-D-muramate + NADP(+) = UDP-N-acetyl-3-O-(1-carboxyvinyl)-alpha-D-glucosamine + NADPH + H(+). Its pathway is cell wall biogenesis; peptidoglycan biosynthesis. In terms of biological role, cell wall formation. The chain is UDP-N-acetylenolpyruvoylglucosamine reductase from Pseudomonas fluorescens (strain Pf0-1).